A 495-amino-acid chain; its full sequence is Probable staphylococcal-like nuclease CAN4 (495 aa).

Gly2 carries N-myristoyl glycine lipidation. Cys11 is lipidated: S-palmitoyl cysteine. Disordered regions lie at residues 45 to 68 (DLQV…RPAL) and 81 to 101 (LQVP…PPRP). Positions 50 to 66 (LSPPPPSTRQQQPPPRP) are enriched in pro residues. One can recognise a TNase-like domain in the interval 297-470 (KTLPVNAKCI…RDARQGLWAY (174 aa)). Position 310 (Asp310) interacts with Ca(2+). Residue Arg377 is part of the active site. A Ca(2+)-binding site is contributed by Asp382. Residues Glu385 and Arg419 contribute to the active site.

This sequence belongs to the thermonuclease family. The cofactor is Ca(2+).

The protein localises to the cell membrane. Its function is as follows. Enzyme that catalyzes the hydrolysis of both DNA and RNA at the 5' position of the phosphodiester bond. The sequence is that of Probable staphylococcal-like nuclease CAN4 from Oryza sativa subsp. japonica (Rice).